Consider the following 779-residue polypeptide: Endonuclease MutS2 (779 aa).

328–335 is a binding site for ATP; sequence GPNTGGKT. The Smr domain occupies 704–779; that stretch reads LDLRGKRYEE…GSGATIVTLG (76 aa).

Belongs to the DNA mismatch repair MutS family. MutS2 subfamily. In terms of assembly, homodimer. Binds to stalled ribosomes, contacting rRNA.

Functionally, endonuclease that is involved in the suppression of homologous recombination and thus may have a key role in the control of bacterial genetic diversity. Acts as a ribosome collision sensor, splitting the ribosome into its 2 subunits. Detects stalled/collided 70S ribosomes which it binds and splits by an ATP-hydrolysis driven conformational change. Acts upstream of the ribosome quality control system (RQC), a ribosome-associated complex that mediates the extraction of incompletely synthesized nascent chains from stalled ribosomes and their subsequent degradation. Probably generates substrates for RQC. In Streptococcus pyogenes serotype M49 (strain NZ131), this protein is Endonuclease MutS2.